A 218-amino-acid polypeptide reads, in one-letter code: 7-cyano-7-deazaguanine synthase (218 aa).

Residue 9–19 participates in ATP binding; sequence YSGGMDSFTVL. Residues cysteine 185, cysteine 193, cysteine 196, and cysteine 199 each coordinate Zn(2+).

Belongs to the QueC family. Zn(2+) is required as a cofactor.

It carries out the reaction 7-carboxy-7-deazaguanine + NH4(+) + ATP = 7-cyano-7-deazaguanine + ADP + phosphate + H2O + H(+). It functions in the pathway purine metabolism; 7-cyano-7-deazaguanine biosynthesis. Functionally, catalyzes the ATP-dependent conversion of 7-carboxy-7-deazaguanine (CDG) to 7-cyano-7-deazaguanine (preQ(0)). The protein is 7-cyano-7-deazaguanine synthase of Alteromonas mediterranea (strain DSM 17117 / CIP 110805 / LMG 28347 / Deep ecotype).